A 695-amino-acid polypeptide reads, in one-letter code: DNA ligase (695 aa).

NAD(+) contacts are provided by residues 44-48 (DAEYD), 93-94 (SL), and glutamate 123. Lysine 125 (N6-AMP-lysine intermediate) is an active-site residue. Residues arginine 146, glutamate 184, lysine 300, and lysine 324 each contribute to the NAD(+) site. Residues cysteine 418, cysteine 421, cysteine 436, and cysteine 442 each contribute to the Zn(2+) site. The 90-residue stretch at 605-694 (SAAKPLAGIT…PDAARSMAQR (90 aa)) folds into the BRCT domain.

The protein belongs to the NAD-dependent DNA ligase family. LigA subfamily. The cofactor is Mg(2+). Mn(2+) is required as a cofactor.

It carries out the reaction NAD(+) + (deoxyribonucleotide)n-3'-hydroxyl + 5'-phospho-(deoxyribonucleotide)m = (deoxyribonucleotide)n+m + AMP + beta-nicotinamide D-nucleotide.. Its function is as follows. DNA ligase that catalyzes the formation of phosphodiester linkages between 5'-phosphoryl and 3'-hydroxyl groups in double-stranded DNA using NAD as a coenzyme and as the energy source for the reaction. It is essential for DNA replication and repair of damaged DNA. The chain is DNA ligase from Acidothermus cellulolyticus (strain ATCC 43068 / DSM 8971 / 11B).